The following is a 40-amino-acid chain: ADNKRPIWVMGGMVNSLAQIKEFVGLGLDNSEKDNKWYKQ.

Glu32 and Asp34 together coordinate Mg(2+).

This sequence belongs to the arthropod phospholipase D family. Class II subfamily. The cofactor is Mg(2+). In terms of processing, contains 2 disulfide bonds. Expressed by the venom gland.

The protein localises to the secreted. It catalyses the reaction an N-(acyl)-sphingosylphosphocholine = an N-(acyl)-sphingosyl-1,3-cyclic phosphate + choline. The enzyme catalyses an N-(acyl)-sphingosylphosphoethanolamine = an N-(acyl)-sphingosyl-1,3-cyclic phosphate + ethanolamine. The catalysed reaction is a 1-acyl-sn-glycero-3-phosphocholine = a 1-acyl-sn-glycero-2,3-cyclic phosphate + choline. It carries out the reaction a 1-acyl-sn-glycero-3-phosphoethanolamine = a 1-acyl-sn-glycero-2,3-cyclic phosphate + ethanolamine. Its function is as follows. Dermonecrotic toxins cleave the phosphodiester linkage between the phosphate and headgroup of certain phospholipids (sphingolipid and lysolipid substrates), forming an alcohol (often choline) and a cyclic phosphate. This toxin acts on sphingomyelin (SM). It may also act on ceramide phosphoethanolamine (CPE), lysophosphatidylcholine (LPC) and lysophosphatidylethanolamine (LPE), but not on lysophosphatidylserine (LPS), and lysophosphatidylglycerol (LPG). It acts by transphosphatidylation, releasing exclusively cyclic phosphate products as second products. In vivo, intradermal injection induces dermonecrosis. Induces, hemolysis, vascular permeability, edema, inflammatory response, and platelet aggregation. This chain is Dermonecrotic toxin LgSicTox-alphaI-1, found in Loxosceles gaucho (Spider).